A 350-amino-acid polypeptide reads, in one-letter code: Putative aminopeptidase MJ0555 (350 aa).

Residues His62 and Asp175 each coordinate a divalent metal cation. Glu207 serves as the catalytic Proton acceptor. A divalent metal cation contacts are provided by Glu208, Asp230, and His321.

This sequence belongs to the peptidase M42 family. A divalent metal cation is required as a cofactor.

This is Putative aminopeptidase MJ0555 from Methanocaldococcus jannaschii (strain ATCC 43067 / DSM 2661 / JAL-1 / JCM 10045 / NBRC 100440) (Methanococcus jannaschii).